A 240-amino-acid polypeptide reads, in one-letter code: MGFMELVYEGKAKAVYKTREGLLMVFKDEVTAGDGARRDKAPGKGALAAETSTLLFQYLQGRGVTTHYLMFVPPNAILVKPAQVPPLEVIVRFKAYGSYLKRMPKAKPLTPFAKPIVEFHYKDDSLHDPLILEDDVVEAGLLTAGELAAVKDMALRAASALRELYASVDCDFVDVKFEFGRVGGELVLVDEVSGDTFRLLCGGEHFDKEYYRKTGDAVGLVERYAKLLELTKLALSRQKV.

It belongs to the SAICAR synthetase family.

The catalysed reaction is 5-amino-1-(5-phospho-D-ribosyl)imidazole-4-carboxylate + L-aspartate + ATP = (2S)-2-[5-amino-1-(5-phospho-beta-D-ribosyl)imidazole-4-carboxamido]succinate + ADP + phosphate + 2 H(+). It participates in purine metabolism; IMP biosynthesis via de novo pathway; 5-amino-1-(5-phospho-D-ribosyl)imidazole-4-carboxamide from 5-amino-1-(5-phospho-D-ribosyl)imidazole-4-carboxylate: step 1/2. The protein is Phosphoribosylaminoimidazole-succinocarboxamide synthase of Pyrobaculum calidifontis (strain DSM 21063 / JCM 11548 / VA1).